Here is a 644-residue protein sequence, read N- to C-terminus: Uromodulin (644 aa).

An N-terminal signal peptide occupies residues Met-1 to Asn-26. The EGF-like 1 domain maps to Glu-30–Glu-66. Disulfide bonds link Cys-34/Cys-43, Cys-37/Cys-52, Cys-54/Cys-65, Cys-71/Cys-84, Cys-79/Cys-93, Cys-95/Cys-107, Cys-113/Cys-127, Cys-121/Cys-136, Cys-138/Cys-149, Cys-151/Cys-162, Cys-156/Cys-173, Cys-177/Cys-270, Cys-198/Cys-285, Cys-220/Cys-258, Cys-226/Cys-290, Cys-251/Cys-259, Cys-300/Cys-309, Cys-303/Cys-318, Cys-320/Cys-350, Cys-338/Cys-428, and Cys-369/Cys-392. An N-linked (GlcNAc...) asparagine glycan is attached at Asn-40. An EGF-like 2; calcium-binding domain is found at Asp-67–Ile-108. Asn-78 is a glycosylation site (N-linked (GlcNAc...) asparagine). In terms of domain architecture, EGF-like 3; calcium-binding spans Asp-109–Glu-150. The tract at residues Cys-151 to Gln-174 is beta hairpin. Positions Asp-175–Ser-294 are D10C. Asn-235 carries N-linked (GlcNAc...) asparagine glycosylation. Residue Asn-278 is glycosylated (N-linked (GlcNAc...) asparagine). In terms of domain architecture, EGF-like 4 spans Ser-295–Val-326. Residue Asn-325 is glycosylated (N-linked (GlcNAc...) asparagine). A ZP-N region spans residues Glu-337–Leu-432. Positions Glu-337–Ser-592 constitute a ZP domain. N-linked (GlcNAc...) asparagine glycans are attached at residues Asn-399 and Asn-450. A flexible ZP-N/ZP-C linker; important for secretion and polymerization into filaments region spans residues Asp-433–Thr-456. Positions Gly-457–Gln-467 are internal hydrophobic patch (IHP). The interval Gly-457–Ser-592 is ZP-C. 3 cysteine pairs are disulfide-bonded: Cys-509/Cys-569, Cys-530/Cys-585, and Cys-574/Cys-581. A glycan (N-linked (GlcNAc...) asparagine) is linked at Asn-516. The segment at Arg-589 to Ser-592 is essential for cleavage by HPN. The external hydrophobic patch (EHP); regulates polymerization into filaments stretch occupies residues Val-601–Arg-609. Residue Ser-615 is the site of GPI-anchor amidated serine attachment. Positions Val-616–His-644 are cleaved as a propeptide — removed in mature form.

As to quaternary structure, homodimer that then polymerizes into long filaments. The filaments can additionally assemble laterally to form a sheet. The filaments consist of a zigzag-shaped backbone with laterally protruding arms which interact with bacterial adhesin fimH. Two fimH molecules can bind to a single UMOD monomer. N-glycosylated. Post-translationally, proteolytically cleaved at a conserved C-terminal proteolytic cleavage site to generate the secreted form found in urine. This cleavage is catalyzed by HPN. As to expression, expression restricted to the thick ascending limb of the loop of Henle (TALH).

Its subcellular location is the apical cell membrane. The protein resides in the basolateral cell membrane. It localises to the cell projection. The protein localises to the cilium membrane. It is found in the secreted. Functionally, functions in biogenesis and organization of the apical membrane of epithelial cells of the thick ascending limb of Henle's loop (TALH), where it promotes formation of complex filamentous gel-like structure that may play a role in the water barrier permeability. May serve as a receptor for binding and endocytosis of cytokines (IL-1, IL-2) and TNF. Facilitates neutrophil migration across renal epithelia. In terms of biological role, in the urine, may contribute to colloid osmotic pressure, retards passage of positively charged electrolytes, and inhibits formation of liquid containing supersaturated salts and subsequent formation of salt crystals. Protects against urinary tract infections by binding to type 1 fimbriated E.coli. Binds to bacterial adhesin fimH which mediates the stable formation of bacterial aggregates, prevents the binding of E.coli to uroplakins UPK1A and UPK1B which act as urothelial receptors for type I fimbriae, and allows for pathogen clearance through micturation. Also promotes aggregation of other bacteria including K.pneumoniae, P.aeruginosa and S.mitis and so may also protect against other uropathogens. The chain is Uromodulin (Umod) from Rattus norvegicus (Rat).